The following is a 673-amino-acid chain: MAETTKIFESHLVKQALKDSVLKLYPVYMIKNPIMFVVEVGMLLALGLTIYPDLFHQESVSRLYVFSIFIILLLTLVFANFSEALAEGRGKAQANALRQTQTEMKARRIKQDGSYEMIDASDLKKGHIVRVATGEQIPNDGKVIKGLATVDESAITGESAPVIKESGGDFDNVIGGTSVASDWLEVEITSEPGHSFLDKMIGLVEGATRKKTPNEIALFTLLMTLTIIFLVVILTMYPLAKFLNFNLSIAMLIALAVCLIPTTIGGLLSAIGIAGMDRVTQFNILAKSGRSVETCGDVNVLILDKTGTITYGNRMADAFIPVKSSSFERLVKAAYESSIADDTPEGRSIVKLAYKQHIDLPQEVGEYIPFTAETRMSGVKFTTREVYKGAPNSMVKRVKEAGGHIPVDLDALVKGVSKKGGTPLVVLEDNEILGVIYLKDVIKDGLVERFRELREMGIETVMCTGDNELTAATIAKEAGVDRFVAECKPEDKINVIREEQAKGHIVAMTGDGTNDAPALAEANVGLAMNSGTMSAKEAANLIDLDSNPTKLMEVVLIGKQLLMTRGSLTTFSIANDIAKYFAILPAMFMAAMPAMNHLNIMHLHSPESAVLSALIFNALIIVLLIPIAMKGVKFKGASTQTILMKNMLVYGLGGMIVPFIGIKLIDLIIQLFV.

4 helical membrane passes run 34–54 (IMFVVEVGMLLALGLTIYPDL), 65–85 (VFSIFIILLLTLVFANFSEAL), 216–236 (IALFTLLMTLTIIFLVVILTM), and 253–273 (IALAVCLIPTTIGGLLSAIGI). The 4-aspartylphosphate intermediate role is filled by D304. ATP contacts are provided by residues D341, E345, 370 to 377 (FTAETRMS), and K388. Residues D511 and D515 each contribute to the Mg(2+) site. A run of 3 helical transmembrane segments spans residues 581 to 601 (FAILPAMFMAAMPAMNHLNIM), 609 to 629 (AVLSALIFNALIIVLLIPIAM), and 649 to 669 (VYGLGGMIVPFIGIKLIDLII).

It belongs to the cation transport ATPase (P-type) (TC 3.A.3) family. Type IA subfamily. The system is composed of three essential subunits: KdpA, KdpB and KdpC.

Its subcellular location is the cell membrane. The enzyme catalyses K(+)(out) + ATP + H2O = K(+)(in) + ADP + phosphate + H(+). Part of the high-affinity ATP-driven potassium transport (or Kdp) system, which catalyzes the hydrolysis of ATP coupled with the electrogenic transport of potassium into the cytoplasm. This subunit is responsible for energy coupling to the transport system and for the release of the potassium ions to the cytoplasm. This Staphylococcus epidermidis (strain ATCC 35984 / DSM 28319 / BCRC 17069 / CCUG 31568 / BM 3577 / RP62A) protein is Potassium-transporting ATPase ATP-binding subunit.